A 2559-amino-acid chain; its full sequence is Ubiquitin carboxyl-terminal hydrolase 9X (2559 aa).

A compositionally biased stretch (polar residues) spans 1-44; the sequence is MTATTRGSPVGGNDNQGQAPDGQSQPPLQQNQTSSPDSSNENSP. Residues 1-64 form a disordered region; that stretch reads MTATTRGSPV…DAPPQIEDEE (64 aa). S374, S375, and S588 each carry phosphoserine. Residues 967-999 form a disordered region; sequence QISSNMPSSPDSSSDSSTGSPGNHGNHYSDGPN. Residues 969 to 989 show a composition bias toward low complexity; it reads SSNMPSSPDSSSDSSTGSPGN. The USP domain maps to 1557-1956; it reads VGLKNAGATC…NAYILFYERM (400 aa). C1566 functions as the Nucleophile in the catalytic mechanism. The tract at residues 1592-1633 is disordered; the sequence is GSDVDDDMSGDEKQDNESNVDPRDDVFGYPQQFEDKPPLSKT. At S1600 the chain carries Phosphoserine. Basic and acidic residues-rich tracts occupy residues 1601–1617 and 1624–1633; these read GDEKQDNESNVDPRDDV and FEDKPPLSKT. Residues C1727, H1729, C1771, and C1774 each contribute to the Zn(2+) site. H1879 serves as the catalytic Proton acceptor. S2443 is modified (phosphoserine). The segment covering 2475 to 2484 has biased composition (acidic residues); the sequence is PEEEPDDQDA. Positions 2475–2559 are disordered; sequence PEEEPDDQDA…QTKGSVKCTY (85 aa). Composition is skewed to polar residues over residues 2503-2513 and 2527-2537; these read PGSQYQQNNHV and NNPQRTGQRAQ. Position 2540 is a phosphotyrosine (Y2540). S2547 carries the post-translational modification Phosphoserine. T2551 carries the phosphothreonine modification.

It belongs to the peptidase C19 family. In terms of assembly, interacts with SMAD4, MARK4, NUAK1 and BIRC5/survivin. Interacts with DCX. Interacts with OTUD4 and USP7; the interaction is direct. As to expression, highest levels in liver and brain with expression also detected in heart, muscle, spleen and kidney (at protein leve). Ubiquitously expressed in adult tissues.

The protein localises to the cytoplasm. Its subcellular location is the cytosol. It localises to the cell projection. The protein resides in the growth cone. It is found in the cytoskeleton. The protein localises to the cilium axoneme. It catalyses the reaction Thiol-dependent hydrolysis of ester, thioester, amide, peptide and isopeptide bonds formed by the C-terminal Gly of ubiquitin (a 76-residue protein attached to proteins as an intracellular targeting signal).. Functionally, deubiquitinase involved both in the processing of ubiquitin precursors and of ubiquitinated proteins. May therefore play an important regulatory role at the level of protein turnover by preventing degradation of proteins through the removal of conjugated ubiquitin. Specifically hydrolyzes 'Lys-11'-, followed by 'Lys-63'-, 'Lys-48'- and 'Lys-6'-linked polyubiquitins chains. Essential component of TGF-beta/BMP signaling cascade. Specifically deubiquitinates monoubiquitinated SMAD4, opposing the activity of E3 ubiquitin-protein ligase TRIM33. Deubiquitinates alkylation repair enzyme ALKBH3. OTUD4 recruits USP7 and USP9X to stabilize ALKBH3, thereby promoting the repair of alkylated DNA lesions. Deubiquitinates RNA demethylase enzyme ALKBH5, promoting its stability. Deubiquitinates mTORC2 complex component RICTOR at 'Lys-294' by removing 'Lys-63'-linked polyubiquitin chains, stabilizing RICTOR and enhancing its binding to MTOR, thus promoting mTORC2 complex assembly. Regulates chromosome alignment and segregation in mitosis by regulating the localization of BIRC5/survivin to mitotic centromeres. Involved in axonal growth and neuronal cell migration. Regulates cellular clock function by enhancing the protein stability and transcriptional activity of the core circadian protein BMAL1 via its deubiquitinating activity. Acts as a regulator of peroxisome import by mediating deubiquitination of PEX5: specifically deubiquitinates PEX5 monoubiquitinated at 'Cys-11' following its retrotranslocation into the cytosol, resetting PEX5 for a subsequent import cycle. Deubiquitinates PEG10. Inhibits the activation of the Hippo signaling pathway via deubiquitination of AMOTL2 at 'Lys-337' and 'Lys-404' which prohibits its interaction with and activation of LATS2. Loss of LATS2 activation and subsequent loss of YAP1 phosphorylation results in an increase in YAP1-driven transcription of target genes. This is Ubiquitin carboxyl-terminal hydrolase 9X from Mus musculus (Mouse).